A 362-amino-acid polypeptide reads, in one-letter code: Major capsid protein VP1 (362 aa).

The segment at 1 to 21 is disordered; that stretch reads MAPTKRKGSCPGAAPKKPKEP. A Bipartite nuclear localization signal motif is present at residues 5-19; the sequence is KRKGSCPGAAPKKPK. Positions 302 to 362 are C-terminal arm; sequence ISFLLSDLIN…EFGQTTTRMQ (61 aa). T338 carries the phosphothreonine; by host modification.

It belongs to the polyomaviruses coat protein VP1 family. As to quaternary structure, homomultimer; disulfide-linked. The virus capsid is composed of 72 icosahedral units, each one composed of five disulfide-linked copies of VP1. Interacts with agnoprotein. Interacts with minor capsid proteins VP2 and VP3. Interacts with host HSPA8; this interaction probably participates in virus assembly. Interacts with host SP1; this interaction enhances the efficiency of viral packaging.

Its subcellular location is the virion. It localises to the host nucleus. The protein resides in the host endoplasmic reticulum. In terms of biological role, forms an icosahedral capsid with a T=7 symmetry and a 40 nm diameter. The capsid is composed of 72 pentamers linked to each other by disulfide bonds and associated with VP2 or VP3 proteins. Binds to N-glycolylneuraminic analog of the ganglioside GM1 on the cell surface to provide virion attachment to target cell. Once attached, the virion is internalized by caveolin-mediated endocytosis and traffics to the endoplasmic reticulum. Inside the endoplasmic reticulum, the protein folding machinery isomerizes VP1 interpentamer disulfide bonds, thereby triggering initial uncoating. Next, the virion uses the endoplasmic reticulum-associated degradation machinery to probably translocate in the cytosol before reaching the nucleus. Nuclear entry of the viral DNA involves the selective exposure and importin recognition of VP2/Vp3 nuclear localization signal. The assembly takes place in the cell nucleus. Encapsulates the genomic DNA and participates in rearranging nucleosomes around the viral DNA. The viral progenies exit the cells by lytic release. The sequence is that of Major capsid protein VP1 from Macaca (macaques).